We begin with the raw amino-acid sequence, 414 residues long: 3-aminobutyryl-CoA aminotransferase (414 aa).

An N6-(pyridoxal phosphate)lysine modification is found at K261.

The protein belongs to the class-III pyridoxal-phosphate-dependent aminotransferase family. In terms of assembly, homodimer. Pyridoxal 5'-phosphate is required as a cofactor.

The catalysed reaction is (3S)-3-aminobutanoyl-CoA + 2-oxoglutarate = acetoacetyl-CoA + L-glutamate. The protein operates within amino-acid degradation; L-lysine degradation via acetate pathway. In terms of biological role, 3-aminobutyryl-CoA aminotransferase that acts specifically on coenzyme A (CoA) esters and catalyzes the conversion of 3-aminobutyryl-CoA into acetoacetyl-CoA in an alternative pathway of lysine fermentation. The protein is 3-aminobutyryl-CoA aminotransferase (kat) of Cloacimonas acidaminovorans (strain Evry).